The sequence spans 793 residues: Lon protease 1 (793 aa).

A Lon N-terminal domain is found at 8–202 (VPVIPLKNSV…KLLDRLQELK (195 aa)). Residue 354–361 (GPPGVGKT) coordinates ATP. The 181-residue stretch at 590–770 (LLPPGVVTGL…NEVLKITLGV (181 aa)) folds into the Lon proteolytic domain. Active-site residues include serine 676 and lysine 719.

It belongs to the peptidase S16 family. In terms of assembly, homohexamer. Organized in a ring with a central cavity.

The protein localises to the cytoplasm. It carries out the reaction Hydrolysis of proteins in presence of ATP.. Its function is as follows. ATP-dependent serine protease that mediates the selective degradation of mutant and abnormal proteins as well as certain short-lived regulatory proteins. Required for cellular homeostasis and for survival from DNA damage and developmental changes induced by stress. Degrades polypeptides processively to yield small peptide fragments that are 5 to 10 amino acids long. Binds to DNA in a double-stranded, site-specific manner. This chain is Lon protease 1, found in Bdellovibrio bacteriovorus (strain ATCC 15356 / DSM 50701 / NCIMB 9529 / HD100).